A 394-amino-acid chain; its full sequence is Phosphoglycerate kinase (394 aa).

Substrate contacts are provided by residues 21–23, R36, 59–62, R118, and R151; these read DFN and HLGR. S183 carries the post-translational modification Phosphoserine. K201 is an ATP binding site. The residue at position 299 (T299) is a Phosphothreonine. ATP is bound by residues E323 and 350 to 353; that span reads GGDS.

It belongs to the phosphoglycerate kinase family. Monomer.

The protein localises to the cytoplasm. It carries out the reaction (2R)-3-phosphoglycerate + ATP = (2R)-3-phospho-glyceroyl phosphate + ADP. It functions in the pathway carbohydrate degradation; glycolysis; pyruvate from D-glyceraldehyde 3-phosphate: step 2/5. The chain is Phosphoglycerate kinase from Halalkalibacterium halodurans (strain ATCC BAA-125 / DSM 18197 / FERM 7344 / JCM 9153 / C-125) (Bacillus halodurans).